The following is a 448-amino-acid chain: N-succinylarginine dihydrolase (448 aa).

Substrate contacts are provided by residues 19–28 (GGLSYGNVAS), N110, and 137–138 (HR). Residue E174 is part of the active site. Substrate is bound at residue R214. Residue H250 is part of the active site. D252 and N365 together coordinate substrate. C371 acts as the Nucleophile in catalysis.

The protein belongs to the succinylarginine dihydrolase family. In terms of assembly, homodimer.

It carries out the reaction N(2)-succinyl-L-arginine + 2 H2O + 2 H(+) = N(2)-succinyl-L-ornithine + 2 NH4(+) + CO2. The protein operates within amino-acid degradation; L-arginine degradation via AST pathway; L-glutamate and succinate from L-arginine: step 2/5. Functionally, catalyzes the hydrolysis of N(2)-succinylarginine into N(2)-succinylornithine, ammonia and CO(2). In Pseudomonas aeruginosa (strain UCBPP-PA14), this protein is N-succinylarginine dihydrolase.